The sequence spans 306 residues: Putative syntaxin-131 (306 aa).

Met-1 carries the N-acetylmethionine modification. Residues 1–276 (MNDLLKGSLE…AVKSQKSSRK (276 aa)) are Cytoplasmic-facing. Over residues 11 to 23 (FSRDRSNRSDIES) the composition is skewed to basic and acidic residues. The interval 11 to 35 (FSRDRSNRSDIESGHGPGNSGDLGL) is disordered. Coiled coils occupy residues 35-72 (LSGF…VTKA) and 134-162 (KKKF…VERR). Positions 205-267 (LAEIQERHDA…QSGNNQLTKA (63 aa)) constitute a t-SNARE coiled-coil homology domain. The helical; Anchor for type IV membrane protein transmembrane segment at 277-297 (WMCIAILILLIIIIITVISVL) threads the bilayer. Over 298-306 (KPWTQKNGA) the chain is Vesicular.

Belongs to the syntaxin family. Part of the t-SNARE complex.

The protein resides in the membrane. Its function is as follows. Vesicle trafficking protein that functions in the secretory pathway. In Arabidopsis thaliana (Mouse-ear cress), this protein is Putative syntaxin-131 (SYP131).